A 155-amino-acid polypeptide reads, in one-letter code: Deoxyuridine 5'-triphosphate nucleotidohydrolase (155 aa).

Substrate contacts are provided by residues 74-76 (RSG), N87, and 91-93 (LID).

Belongs to the dUTPase family. The cofactor is Mg(2+).

It carries out the reaction dUTP + H2O = dUMP + diphosphate + H(+). It functions in the pathway pyrimidine metabolism; dUMP biosynthesis; dUMP from dCTP (dUTP route): step 2/2. This enzyme is involved in nucleotide metabolism: it produces dUMP, the immediate precursor of thymidine nucleotides and it decreases the intracellular concentration of dUTP so that uracil cannot be incorporated into DNA. In Xylella fastidiosa (strain M23), this protein is Deoxyuridine 5'-triphosphate nucleotidohydrolase.